The following is a 155-amino-acid chain: uncharacterized protein (155 aa).

The transit peptide at 1–17 (MMRGASKRSISSAAVLL) directs the protein to the mitochondrion. The disordered stretch occupies residues 111–155 (WHRQQKRSQRRRSVAKYEQREEAARVEKEEREARDREMVRELFRR). Positions 113 to 124 (RQQKRSQRRRSV) are enriched in basic residues. Residues 125-155 (AKYEQREEAARVEKEEREARDREMVRELFRR) are compositionally biased toward basic and acidic residues.

The protein belongs to the prokaryotic/mitochondrial release factor family.

The protein resides in the mitochondrion. This is an uncharacterized protein from Saccharomyces cerevisiae (strain ATCC 204508 / S288c) (Baker's yeast).